The sequence spans 142 residues: Large ribosomal subunit protein uL13 (142 aa).

This sequence belongs to the universal ribosomal protein uL13 family. As to quaternary structure, part of the 50S ribosomal subunit.

In terms of biological role, this protein is one of the early assembly proteins of the 50S ribosomal subunit, although it is not seen to bind rRNA by itself. It is important during the early stages of 50S assembly. The sequence is that of Large ribosomal subunit protein uL13 from Baumannia cicadellinicola subsp. Homalodisca coagulata.